The sequence spans 381 residues: RING-H2 finger protein ATL1 (381 aa).

Residues 1–31 are disordered; sequence MDLTDRRNPFNNLVFPPPPPPPSTTFTSPIF. Residues 46-66 traverse the membrane as a helical segment; it reads IAVIGILATAFLLVSYYIFVI. The RING-type; atypical zinc-finger motif lies at 134–176; it reads CSVCLNEFQEDEKLRIIPNCCHVFHIDCIDIWLQGNANCPLCR. 2 disordered regions span residues 249 to 269 and 334 to 354; these read TSNEVSTGNSPKSVSPLPIKF and RQIPVAGDGEDSSSSGGGNSR. The segment covering 250–261 has biased composition (polar residues); it reads SNEVSTGNSPKS.

It belongs to the RING-type zinc finger family. ATL subfamily.

The protein localises to the membrane. It carries out the reaction S-ubiquitinyl-[E2 ubiquitin-conjugating enzyme]-L-cysteine + [acceptor protein]-L-lysine = [E2 ubiquitin-conjugating enzyme]-L-cysteine + N(6)-ubiquitinyl-[acceptor protein]-L-lysine.. It functions in the pathway protein modification; protein ubiquitination. The chain is RING-H2 finger protein ATL1 (ATL1) from Arabidopsis thaliana (Mouse-ear cress).